The sequence spans 472 residues: Siroheme synthase 1 (472 aa).

Residues 1–203 (MDYLPLFADL…GQLTEAENEL (203 aa)) are precorrin-2 dehydrogenase /sirohydrochlorin ferrochelatase. NAD(+)-binding positions include 22–23 (EV) and 43–44 (QT). Ser128 bears the Phosphoserine mark. A uroporphyrinogen-III C-methyltransferase region spans residues 215–472 (GEVALVGAGP…AISPSVVNLA (258 aa)). Pro224 serves as a coordination point for S-adenosyl-L-methionine. The active-site Proton acceptor is Asp247. The active-site Proton donor is Lys269. Residues 300–302 (GGD), Ile305, 330–331 (TA), Met382, and Gly411 each bind S-adenosyl-L-methionine.

The protein in the N-terminal section; belongs to the precorrin-2 dehydrogenase / sirohydrochlorin ferrochelatase family. This sequence in the C-terminal section; belongs to the precorrin methyltransferase family.

The catalysed reaction is uroporphyrinogen III + 2 S-adenosyl-L-methionine = precorrin-2 + 2 S-adenosyl-L-homocysteine + H(+). The enzyme catalyses precorrin-2 + NAD(+) = sirohydrochlorin + NADH + 2 H(+). It carries out the reaction siroheme + 2 H(+) = sirohydrochlorin + Fe(2+). Its pathway is cofactor biosynthesis; adenosylcobalamin biosynthesis; precorrin-2 from uroporphyrinogen III: step 1/1. It participates in cofactor biosynthesis; adenosylcobalamin biosynthesis; sirohydrochlorin from precorrin-2: step 1/1. The protein operates within porphyrin-containing compound metabolism; siroheme biosynthesis; precorrin-2 from uroporphyrinogen III: step 1/1. It functions in the pathway porphyrin-containing compound metabolism; siroheme biosynthesis; siroheme from sirohydrochlorin: step 1/1. Its pathway is porphyrin-containing compound metabolism; siroheme biosynthesis; sirohydrochlorin from precorrin-2: step 1/1. Its function is as follows. Multifunctional enzyme that catalyzes the SAM-dependent methylations of uroporphyrinogen III at position C-2 and C-7 to form precorrin-2 via precorrin-1. Then it catalyzes the NAD-dependent ring dehydrogenation of precorrin-2 to yield sirohydrochlorin. Finally, it catalyzes the ferrochelation of sirohydrochlorin to yield siroheme. This is Siroheme synthase 1 from Yersinia pseudotuberculosis serotype I (strain IP32953).